Consider the following 471-residue polypeptide: Tryptophanase (471 aa).

N6-acetyllysine is present on residues K5, K115, and K156. At K270 the chain carries N6-(pyridoxal phosphate)lysine. K450 carries the N6-acetyllysine modification.

The protein belongs to the beta-eliminating lyase family. As to quaternary structure, homotetramer. It depends on pyridoxal 5'-phosphate as a cofactor.

It carries out the reaction L-tryptophan + H2O = indole + pyruvate + NH4(+). It participates in amino-acid degradation; L-tryptophan degradation via pyruvate pathway; indole and pyruvate from L-tryptophan: step 1/1. The sequence is that of Tryptophanase from Escherichia coli O6:H1 (strain CFT073 / ATCC 700928 / UPEC).